Here is a 196-residue protein sequence, read N- to C-terminus: uncharacterized protein (196 aa).

Residues Gly20–Val40 form a helical membrane-spanning segment.

Its subcellular location is the membrane. This is an uncharacterized protein from Mycobacterium tuberculosis (strain CDC 1551 / Oshkosh).